A 236-amino-acid polypeptide reads, in one-letter code: 2-C-methyl-D-erythritol 4-phosphate cytidylyltransferase (236 aa).

Belongs to the IspD/TarI cytidylyltransferase family. IspD subfamily. In terms of assembly, homodimer.

The enzyme catalyses 2-C-methyl-D-erythritol 4-phosphate + CTP + H(+) = 4-CDP-2-C-methyl-D-erythritol + diphosphate. It participates in isoprenoid biosynthesis; isopentenyl diphosphate biosynthesis via DXP pathway; isopentenyl diphosphate from 1-deoxy-D-xylulose 5-phosphate: step 2/6. Its function is as follows. Catalyzes the formation of 4-diphosphocytidyl-2-C-methyl-D-erythritol from CTP and 2-C-methyl-D-erythritol 4-phosphate (MEP). The protein is 2-C-methyl-D-erythritol 4-phosphate cytidylyltransferase of Escherichia coli O45:K1 (strain S88 / ExPEC).